We begin with the raw amino-acid sequence, 371 residues long: Histidinol-phosphate aminotransferase (371 aa).

An N6-(pyridoxal phosphate)lysine modification is found at lysine 227.

It belongs to the class-II pyridoxal-phosphate-dependent aminotransferase family. Histidinol-phosphate aminotransferase subfamily. As to quaternary structure, homodimer. Requires pyridoxal 5'-phosphate as cofactor.

It carries out the reaction L-histidinol phosphate + 2-oxoglutarate = 3-(imidazol-4-yl)-2-oxopropyl phosphate + L-glutamate. The protein operates within amino-acid biosynthesis; L-histidine biosynthesis; L-histidine from 5-phospho-alpha-D-ribose 1-diphosphate: step 7/9. This is Histidinol-phosphate aminotransferase from Sphingopyxis alaskensis (strain DSM 13593 / LMG 18877 / RB2256) (Sphingomonas alaskensis).